The chain runs to 299 residues: Nucleotide-binding protein Moth_0258 (299 aa).

An ATP-binding site is contributed by 14–21 (GLSGAGKT). Position 68–71 (68–71 (DIRG)) interacts with GTP.

The protein belongs to the RapZ-like family.

Functionally, displays ATPase and GTPase activities. The protein is Nucleotide-binding protein Moth_0258 of Moorella thermoacetica (strain ATCC 39073 / JCM 9320).